We begin with the raw amino-acid sequence, 357 residues long: CRISPR system Cms protein Csm5 (357 aa).

The protein belongs to the CRISPR-associated Csm5 family. Part of the Csm effector complex that includes at least Cas10(1), Csm2(3), Csm3(5), Csm4(1), Csm5(1) and mature crRNA. The Csm complex is elongated and slightly twisted with a maximal length of 215 Angstroms and a diameter of 75-80 Angstroms. It has been modeled to have a central protein filamant of Csm3 subunits along which the dsRNA helix of paired crRNA and target RNA binds. The filament is capped at one end by Cas10 and Csm4 and at the other end by Csm5; ssDNA is thought to bind to the N-terminal HD domain of Cas10. Csm with a precursor crRNA does not include Csm5, while Cas6, the enzyme probably involved in pre-crRNA processing, is found associated with a subset of the Csm complex.

CRISPR (clustered regularly interspaced short palindromic repeat) is an adaptive immune system that provides protection against mobile genetic elements (viruses, transposable elements and conjugative plasmids). CRISPR clusters contain spacers, sequences complementary to antecedent mobile elements, and target invading nucleic acids. CRISPR clusters are transcribed and processed into CRISPR RNA (crRNA). The type III-A Csm effector complex binds crRNA and acts as a crRNA-guided RNase, DNase and cyclic oligoadenylate synthase; binding of target RNA cognate to the crRNA is required for all activities. In a heterologous host this Csm effector complex restricts ssRNA phage MS2, suggesting it may target RNA viruses in vivo. Functionally, csm functions as a non-specific ssDNase. Base-pairing between crRNA and target RNA to form a ternary Csm complex activates a ssDNase activity; target RNA cleavage suppresses the ssDNase, a temporal control that prevents uncontrolled DNA degradation. Viral RNA transcripts probably tether the Csm complex to the viral genome, recruiting Cas10 ssDNA activity which is able to degrade DNA in the transcription bubble, spatially controlling the DNase activity. Its function is as follows. This subunit might be involved in maturation of a crRNA intermediate to its mature form. The protein is CRISPR system Cms protein Csm5 of Streptococcus thermophilus.